The following is a 173-amino-acid chain: Enhancer of split mdelta protein (173 aa).

Residues 15–72 (YRKVTKPLLERKRRARMNLYLDELKDLIVDTMDAQGEQVSKLEKADILELTVNYLKAQ) form the bHLH domain. An Orange domain is found at 93-126 (FRAGYTQAAYEVSHIFSTVPGLDLKFGTHLMKQL). Positions 147 to 173 (VNLADQKRSKSPREEDIHHGEEVWRPW) are disordered. Positions 151–173 (DQKRSKSPREEDIHHGEEVWRPW) are enriched in basic and acidic residues. A WRPW motif motif is present at residues 170-173 (WRPW).

In terms of assembly, transcription repression requires formation of a complex with a corepressor protein (Groucho).

It localises to the nucleus. Functionally, transcriptional repressor of genes that require a bHLH protein for their transcription. May serve as a transcriptional regulator of the Achaete-scute complex (AS-C) genes. Contributes to the neural-epidermal lineage decision during early neurogenesis. As part of the Notch signaling pathway, required to maintain the self-renewal and identity of type II neuroblasts by regulating the expression of the transcriptional repressor erm. The chain is Enhancer of split mdelta protein from Drosophila melanogaster (Fruit fly).